A 245-amino-acid chain; its full sequence is MSQSGSVLRRNGFTFKQFFVAHDRCAMKVGTDGILLGAWAPVADVKRILDIGTGSGLLALMLAQRTDDNVPIDAVELDAGAAMQAQENVAHSPWPHRITVHTDDIQRWAPRQTVRFDLIISNPPYYEPGVECATPQREQARYTATLDHQTLLAIAADCITEDGFFCVVLPEQIGNAFTQQALNMGWHLRLRTDVAENEARLPHRVLLAFSPQAGECFSDRLVIRGSDQHYSESYTALTQAFYLFM.

Belongs to the methyltransferase superfamily. tRNA (adenine-N(6)-)-methyltransferase family.

The protein resides in the cytoplasm. It carries out the reaction adenosine(37) in tRNA1(Val) + S-adenosyl-L-methionine = N(6)-methyladenosine(37) in tRNA1(Val) + S-adenosyl-L-homocysteine + H(+). Functionally, specifically methylates the adenine in position 37 of tRNA(1)(Val) (anticodon cmo5UAC). The sequence is that of tRNA1(Val) (adenine(37)-N6)-methyltransferase from Salmonella paratyphi C (strain RKS4594).